We begin with the raw amino-acid sequence, 201 residues long: Probable chemoreceptor glutamine deamidase CheD 1 (201 aa).

The protein belongs to the CheD family.

The enzyme catalyses L-glutaminyl-[protein] + H2O = L-glutamyl-[protein] + NH4(+). In terms of biological role, probably deamidates glutamine residues to glutamate on methyl-accepting chemotaxis receptors (MCPs), playing an important role in chemotaxis. This is Probable chemoreceptor glutamine deamidase CheD 1 from Geobacter sulfurreducens (strain ATCC 51573 / DSM 12127 / PCA).